Consider the following 363-residue polypeptide: Suberization-associated anionic peroxidase (363 aa).

An N-terminal signal peptide occupies residues 1-20 (MGFRLSHLSLALSFVALALA). N-linked (GlcNAc...) asparagine glycosylation occurs at Asn-36. 2 disulfides stabilise this stretch: Cys-80–Cys-159 and Cys-111–Cys-116. His-109 serves as the catalytic Proton acceptor. Residues Asp-110, Val-113, Gly-115, and Asp-117 each contribute to the Ca(2+) site. N-linked (GlcNAc...) asparagine glycosylation is found at Asn-126, Asn-161, and Asn-199. 2 cysteine pairs are disulfide-bonded: Cys-166–Cys-352 and Cys-245–Cys-264. A substrate-binding site is contributed by Pro-208. N-linked (GlcNAc...) asparagine glycans are attached at residues Asn-213 and Asn-225. Residue His-238 participates in heme b binding. Ca(2+) is bound at residue Thr-239. An N-linked (GlcNAc...) asparagine glycan is attached at Asn-263. 3 residues coordinate Ca(2+): Asp-277, Thr-279, and Asp-284.

The protein belongs to the peroxidase family. Classical plant (class III) peroxidase subfamily. Requires Ca(2+) as cofactor. Heme b is required as a cofactor.

The protein localises to the secreted. It carries out the reaction 2 a phenolic donor + H2O2 = 2 a phenolic radical donor + 2 H2O. Functionally, removal of H(2)O(2), oxidation of toxic reductants, biosynthesis and degradation of lignin, suberization, auxin catabolism, response to environmental stresses such as wounding, pathogen attack and oxidative stress. These functions might be dependent on each isozyme/isoform in each plant tissue. Suggested to catalyze the deposition of the aromatic residues of suberin on the cell wall and thus play a role in cell-suberization. The polypeptide is Suberization-associated anionic peroxidase (Solanum tuberosum (Potato)).